A 366-amino-acid polypeptide reads, in one-letter code: Cobalt-precorrin-5B C(1)-methyltransferase (366 aa).

Belongs to the CbiD family.

It carries out the reaction Co-precorrin-5B + S-adenosyl-L-methionine = Co-precorrin-6A + S-adenosyl-L-homocysteine. It functions in the pathway cofactor biosynthesis; adenosylcobalamin biosynthesis; cob(II)yrinate a,c-diamide from sirohydrochlorin (anaerobic route): step 6/10. Catalyzes the methylation of C-1 in cobalt-precorrin-5B to form cobalt-precorrin-6A. The sequence is that of Cobalt-precorrin-5B C(1)-methyltransferase from Paraburkholderia phymatum (strain DSM 17167 / CIP 108236 / LMG 21445 / STM815) (Burkholderia phymatum).